The primary structure comprises 558 residues: Nucleoprotein (558 aa).

The tract at residues 54–237 is binding site for the cap structure m7GTP; the sequence is MRKERRDDKD…ITEQQSSINI (184 aa). Mn(2+)-binding residues include Asp-382 and Glu-384. Glu-392, Cys-499, His-502, and Cys-518 together coordinate Zn(2+). Mn(2+) is bound at residue Asp-522.

This sequence belongs to the arenaviridae nucleocapsid protein family. As to quaternary structure, homomultimerizes to form the nucleocapsid. Binds to viral genomic RNA. Interacts with glycoprotein G2. Interacts with protein Z; this interaction probably directs the encapsidated genome to budding sites. Interacts with protein L; this interaction does not interfere with Z-L interaction. Interacts with host IKBKE (via Protein kinase domain); the interaction inhibits IKBKE kinase activity.

Its subcellular location is the virion. It is found in the host cytoplasm. Encapsidates the genome, protecting it from nucleases. The encapsidated genomic RNA is termed the nucleocapsid (NC). Serves as template for viral transcription and replication. The increased presence of protein N in host cell does not seem to trigger the switch from transcription to replication as observed in other negative strain RNA viruses. Through the interaction with host IKBKE, strongly inhibits the phosphorylation and nuclear translocation of host IRF3, a protein involved in interferon activation pathway, leading to the inhibition of interferon-beta and IRF3-dependent promoters activation. Also encodes a functional 3'-5' exoribonuclease that degrades preferentially dsRNA substrates and thereby participates in the suppression of interferon induction. The chain is Nucleoprotein from Lymphocytic choriomeningitis virus (strain WE) (LCMV).